Consider the following 98-residue polypeptide: MSLAHINIFLAFTVSLVGLLMYRSHLMSSLLCLEGMMLSLFVMATMVVLNTHFTLASMMPIILLVFAACERALGLSLLVMVSNTYGVDHVQNLNLLQC.

The next 3 helical transmembrane spans lie at 1-21 (MSLAHINIFLAFTVSLVGLLM), 25-45 (HLMSSLLCLEGMMLSLFVMAT), and 59-81 (MPIILLVFAACERALGLSLLVMV).

It belongs to the complex I subunit 4L family. As to quaternary structure, core subunit of respiratory chain NADH dehydrogenase (Complex I) which is composed of 45 different subunits.

It is found in the mitochondrion inner membrane. The catalysed reaction is a ubiquinone + NADH + 5 H(+)(in) = a ubiquinol + NAD(+) + 4 H(+)(out). Core subunit of the mitochondrial membrane respiratory chain NADH dehydrogenase (Complex I) which catalyzes electron transfer from NADH through the respiratory chain, using ubiquinone as an electron acceptor. Part of the enzyme membrane arm which is embedded in the lipid bilayer and involved in proton translocation. This is NADH-ubiquinone oxidoreductase chain 4L (MT-ND4L) from Equus asinus (Donkey).